The primary structure comprises 559 residues: D-2-hydroxyglutarate dehydrogenase, mitochondrial (559 aa).

Residues Met-1–Phe-78 constitute a mitochondrion transit peptide. The region spanning Tyr-130 to Lys-309 is the FAD-binding PCMH-type domain.

Belongs to the FAD-binding oxidoreductase/transferase type 4 family. In terms of assembly, homodimer. The cofactor is FAD.

The protein localises to the mitochondrion. The enzyme catalyses (R)-2-hydroxyglutarate + A = 2-oxoglutarate + AH2. Functionally, catalyzes the oxidation of (R)-2-hydroxyglutarate to 2-oxoglutarate. May be involved in the catabolism of propionyl-CoA derived from beta-oxidation. Involved in degradation of lysine for the supply of carbon and electrons to the ETF/ETFQO complex during dark-induced sugar starvation. The sequence is that of D-2-hydroxyglutarate dehydrogenase, mitochondrial (D2HGDH) from Arabidopsis thaliana (Mouse-ear cress).